The primary structure comprises 352 residues: 3-isopropylmalate dehydrogenase (352 aa).

Glycine 76–glutamate 89 contacts NAD(+). Substrate contacts are provided by arginine 96, arginine 106, arginine 134, and aspartate 220. Mg(2+)-binding residues include aspartate 220, aspartate 244, and aspartate 248. Glycine 277–asparagine 289 provides a ligand contact to NAD(+).

It belongs to the isocitrate and isopropylmalate dehydrogenases family. LeuB type 1 subfamily. As to quaternary structure, homodimer. The cofactor is Mg(2+). Mn(2+) is required as a cofactor.

The protein resides in the cytoplasm. The catalysed reaction is (2R,3S)-3-isopropylmalate + NAD(+) = 4-methyl-2-oxopentanoate + CO2 + NADH. The protein operates within amino-acid biosynthesis; L-leucine biosynthesis; L-leucine from 3-methyl-2-oxobutanoate: step 3/4. Catalyzes the oxidation of 3-carboxy-2-hydroxy-4-methylpentanoate (3-isopropylmalate) to 3-carboxy-4-methyl-2-oxopentanoate. The product decarboxylates to 4-methyl-2 oxopentanoate. The sequence is that of 3-isopropylmalate dehydrogenase from Chlorobaculum tepidum (strain ATCC 49652 / DSM 12025 / NBRC 103806 / TLS) (Chlorobium tepidum).